Reading from the N-terminus, the 267-residue chain is Thiamine thiazole synthase (267 aa).

NAD(+) contacts are provided by residues S41, E60–R61, G68, V132, and H160–D162. The Fe cation site is built by D162 and H177. M227 contacts NAD(+). Glycine is bound at residue R237.

Belongs to the THI4 family. Homooctamer; tetramer of dimers. Fe(2+) serves as cofactor.

The enzyme catalyses hydrogen sulfide + glycine + NAD(+) = ADP-5-ethyl-4-methylthiazole-2-carboxylate + nicotinamide + 3 H2O + H(+). It functions in the pathway cofactor biosynthesis; thiamine diphosphate biosynthesis. Functionally, involved in the biosynthesis of the thiazole moiety of thiamine. Catalyzes the conversion of NAD and glycine to adenosine diphosphate 5-(2-hydroxyethyl)-4-methylthiazole-2-carboxylate (ADT), an adenylated thiazole intermediate, using free sulfide as a source of sulfur. The sequence is that of Thiamine thiazole synthase from Saccharolobus solfataricus (strain ATCC 35092 / DSM 1617 / JCM 11322 / P2) (Sulfolobus solfataricus).